The primary structure comprises 273 residues: Chaperone protein PsaB (273 aa).

An N-terminal signal peptide occupies residues 1–31; that stretch reads MKNLFFSAYKKVFSYITSIVIFMVSLPYAYS. A disulfide bond links Cys-128 and Cys-163.

Belongs to the periplasmic pilus chaperone family.

The protein resides in the periplasm. Required for the biogenesis of the pH 6 antigen. The chain is Chaperone protein PsaB (psaB) from Yersinia pestis.